We begin with the raw amino-acid sequence, 285 residues long: Bifunctional protein FolD (285 aa).

NADP(+)-binding positions include 166-168 (GAS) and I232.

It belongs to the tetrahydrofolate dehydrogenase/cyclohydrolase family. Homodimer.

It carries out the reaction (6R)-5,10-methylene-5,6,7,8-tetrahydrofolate + NADP(+) = (6R)-5,10-methenyltetrahydrofolate + NADPH. The enzyme catalyses (6R)-5,10-methenyltetrahydrofolate + H2O = (6R)-10-formyltetrahydrofolate + H(+). The protein operates within one-carbon metabolism; tetrahydrofolate interconversion. Its function is as follows. Catalyzes the oxidation of 5,10-methylenetetrahydrofolate to 5,10-methenyltetrahydrofolate and then the hydrolysis of 5,10-methenyltetrahydrofolate to 10-formyltetrahydrofolate. The polypeptide is Bifunctional protein FolD (Aliivibrio salmonicida (strain LFI1238) (Vibrio salmonicida (strain LFI1238))).